A 65-amino-acid polypeptide reads, in one-letter code: uncharacterized protein (65 aa).

This is an uncharacterized protein from Dictyostelium discoideum (Social amoeba).